The sequence spans 121 residues: Small ribosomal subunit protein uS13 (121 aa).

The tract at residues 98 to 121 (RGQKTRNNAHTVKGKPKSIAGKKK) is disordered. Positions 109–121 (VKGKPKSIAGKKK) are enriched in basic residues.

This sequence belongs to the universal ribosomal protein uS13 family. Part of the 30S ribosomal subunit. Forms a loose heterodimer with protein S19. Forms two bridges to the 50S subunit in the 70S ribosome.

Located at the top of the head of the 30S subunit, it contacts several helices of the 16S rRNA. In the 70S ribosome it contacts the 23S rRNA (bridge B1a) and protein L5 of the 50S subunit (bridge B1b), connecting the 2 subunits; these bridges are implicated in subunit movement. Contacts the tRNAs in the A and P-sites. This is Small ribosomal subunit protein uS13 from Phytoplasma australiense.